Reading from the N-terminus, the 252-residue chain is MRPLIVIGNWKMNGNLASNQDWVKTVARGMESGMPAGRKFAVCPSFPYLSQCSTLIKEHSLAFLSLGAQDVSAHGAGAYTGEVGASMLKEMGCEYVIVGHSERRQMHQEADESVAAKALQALDSGMTPVICVGETADERNSGRAEEIVCSQVAKQVSVLQDRLADCLIAYEPVWAIGTGKVASAQVAQDMHRAIRMQLAEFDEDVASHVGILYGGSVKPDNAVELFAMPDIDGGLVGGASLNPQDFLAICQA.

9–11 (NWK) lines the substrate pocket. His100 acts as the Electrophile in catalysis. The active-site Proton acceptor is the Glu171. Substrate-binding positions include Gly177, Ser216, and 237–238 (GG).

It belongs to the triosephosphate isomerase family. Homodimer.

It is found in the cytoplasm. The enzyme catalyses D-glyceraldehyde 3-phosphate = dihydroxyacetone phosphate. It functions in the pathway carbohydrate biosynthesis; gluconeogenesis. The protein operates within carbohydrate degradation; glycolysis; D-glyceraldehyde 3-phosphate from glycerone phosphate: step 1/1. In terms of biological role, involved in the gluconeogenesis. Catalyzes stereospecifically the conversion of dihydroxyacetone phosphate (DHAP) to D-glyceraldehyde-3-phosphate (G3P). The polypeptide is Triosephosphate isomerase (Polynucleobacter asymbioticus (strain DSM 18221 / CIP 109841 / QLW-P1DMWA-1) (Polynucleobacter necessarius subsp. asymbioticus)).